A 1520-amino-acid chain; its full sequence is Glutamate synthase [NADPH] large chain (1520 aa).

C22 functions as the For GATase activity in the catalytic mechanism. The region spanning 22–415 (CGIGLYAHLK…PGKMLLIDLE (394 aa)) is the Glutamine amidotransferase type-2 domain. Residues 890–913 (GGKSNSGEGGEDPKRFVPDENGDD) form a disordered region. The segment covering 900–913 (EDPKRFVPDENGDD) has biased composition (basic and acidic residues). 1060 to 1112 (LAEAHQTLMLNGLRDRVVLETDGKLMTGRDVVMAALLGAEEFGFATAPLVVLG) provides a ligand contact to FMN. [3Fe-4S] cluster is bound by residues C1113, C1119, and C1124.

The protein belongs to the glutamate synthase family. Aggregate of 4 catalytic active heterodimers, consisting of a large and a small subunit. It depends on [3Fe-4S] cluster as a cofactor. The cofactor is FAD. FMN serves as cofactor.

The enzyme catalyses 2 L-glutamate + NADP(+) = L-glutamine + 2-oxoglutarate + NADPH + H(+). It participates in amino-acid biosynthesis; L-glutamate biosynthesis via GLT pathway; L-glutamate from 2-oxoglutarate and L-glutamine (NADP(+) route): step 1/1. It functions in the pathway energy metabolism; nitrogen metabolism. This Bacillus subtilis (strain 168) protein is Glutamate synthase [NADPH] large chain (gltA).